The following is a 476-amino-acid chain: MTDMAGLMERLERAVIRLEQLSAGLDGPPRGCGEVNGVNGGVAPSVEAFDKLINSMVAEFLKNSRVLAGDVETHAEMVHGAFQAQRAFLLMVSQYQQPQENEVAVLLKPISEKIQEIQTFRERNRGSNMFNHLSAVSESIAALGWIAVSPKPGPYVKEMNDAATFYTNRVLKDYKHSDLRHVDWVRSYLNIWSELQAYIREHHTTGLTWSKTGPVASTASAFSILSSGPGLPPPPPPPPPPGPPPPFENEDKKEEPSPSRSALFAQLNQGEAITKGLRHVTDDKKTYKNPSLRAQGQIRSPTKTHTPSPTSPKSNSPQKHTPVLELEGKKWRVEYQEDRNDLVISETELKQVAYIFKCDKSTLQIKGKVNSITVDNCKKFGLVFDHVVGIVEVINSKDIQIQVMGRVPTISINKTEGCHLYLSEDALDCEIVSAKSSEMNVLVPQDDDYREFPIPEQFKTIWDGSKLVTEPAEIMA.

The disordered stretch occupies residues 223–322 (SILSSGPGLP…KSNSPQKHTP (100 aa)). Over residues 230–247 (GLPPPPPPPPPPGPPPPF) the composition is skewed to pro residues. Residues 288–299 (KNPSLRAQGQIR) are compositionally biased toward polar residues. Phosphoserine occurs at positions 300 and 308. Positions 300-317 (SPTKTHTPSPTSPKSNSP) are enriched in low complexity. A C-CAP/cofactor C-like domain is found at 317–454 (PQKHTPVLEL…QDDDYREFPI (138 aa)).

It belongs to the CAP family. In terms of tissue distribution, expressed in the heart, skeletal muscle, and brain.

It is found in the cell membrane. Functionally, involved in the regulation of actin polymerization. The polypeptide is Adenylyl cyclase-associated protein 2 (Cap2) (Mus musculus (Mouse)).